A 222-amino-acid chain; its full sequence is Charged multivesicular body protein 4a (222 aa).

2 disordered regions span residues 1 to 21 (MSGLGRLFGKGKKEKGPTPEE) and 180 to 211 (VGDKEEEPSVKLPSVPSTHLPAGPAPKVDEDE). Positions 1–116 (MSGLGRLFGK…ELAAQSMKKA (116 aa)) are interaction with phosphoinosides. The tract at residues 1–150 (MSGLGRLFGK…QISDAISRPM (150 aa)) is intramolecular interaction with C-terminus. Coiled-coil stretches lie at residues 20–105 (EEAI…VLRT) and 155–180 (DVDEDELLEELEELEQEELAQELLNV). Positions 151–222 (GFGDDVDEDE…ALKQLAEWVS (72 aa)) are intramolecular interaction with N-terminus. Position 196 is a phosphoserine (S196).

Belongs to the SNF7 family. In terms of assembly, probable core component of the endosomal sorting required for transport complex III (ESCRT-III). ESCRT-III components are thought to multimerize to form a flat lattice on the perimeter membrane of the endosome. Several assembly forms of ESCRT-III may exist that interact and act sequentially. Self-associates; overexpression leads to the assembly of filaments that curve and associate to create circular rings. Interacts with CHMP2A. Interacts with CHMP3; the interaction requires the release of CHMP4A autoinhibition. Interacts with CHMP4B. Interacts with CHMP4C. Interacts with CHMP6. Interacts with VPS4A. Interacts with PDCD6IP; the interaction is direct. As to expression, widely expressed. Expressed at higher level in heart, kidney, liver and skeletal muscle. Also expressed in brain, placenta, lung and pancreas.

It localises to the cytoplasmic vesicle membrane. Its subcellular location is the late endosome membrane. Probable core component of the endosomal sorting required for transport complex III (ESCRT-III) which is involved in multivesicular bodies (MVBs) formation and sorting of endosomal cargo proteins into MVBs. MVBs contain intraluminal vesicles (ILVs) that are generated by invagination and scission from the limiting membrane of the endosome and mostly are delivered to lysosomes enabling degradation of membrane proteins, such as stimulated growth factor receptors, lysosomal enzymes and lipids. The MVB pathway appears to require the sequential function of ESCRT-O, -I,-II and -III complexes. ESCRT-III proteins mostly dissociate from the invaginating membrane before the ILV is released. The ESCRT machinery also functions in topologically equivalent membrane fission events, such as the terminal stages of cytokinesis and the budding of enveloped viruses (HIV-1 and other lentiviruses). ESCRT-III proteins are believed to mediate the necessary vesicle extrusion and/or membrane fission activities, possibly in conjunction with the AAA ATPase VPS4. When overexpressed, membrane-assembled circular arrays of CHMP4A filaments can promote or stabilize negative curvature and outward budding. Via its interaction with PDCD6IP involved in HIV-1 p6- and p9-dependent virus release. CHMP4A/B/C are required for the exosomal release of SDCBP, CD63 and syndecan. This chain is Charged multivesicular body protein 4a (CHMP4A), found in Homo sapiens (Human).